Here is a 105-residue protein sequence, read N- to C-terminus: Heat shock protein HspQ (105 aa).

The interval 74 to 105 (SSELQDERPEQPSMDELAQTIRKQRQAPRLRN) is disordered. A compositionally biased stretch (basic residues) spans 95–105 (RKQRQAPRLRN).

The protein belongs to the HspQ family.

The protein localises to the cytoplasm. Its function is as follows. Involved in the degradation of certain denaturated proteins, including DnaA, during heat shock stress. This chain is Heat shock protein HspQ, found in Shigella dysenteriae serotype 1 (strain Sd197).